The chain runs to 118 residues: Large ribosomal subunit protein bL20 (118 aa).

Belongs to the bacterial ribosomal protein bL20 family.

Its function is as follows. Binds directly to 23S ribosomal RNA and is necessary for the in vitro assembly process of the 50S ribosomal subunit. It is not involved in the protein synthesizing functions of that subunit. The sequence is that of Large ribosomal subunit protein bL20 (rplT) from Aquifex aeolicus (strain VF5).